Reading from the N-terminus, the 1458-residue chain is Anaphase-promoting complex subunit 1 (1458 aa).

The tract at residues 186-210 (QSIKSSRNRRRESSFSREKNPDLTR) is disordered. A compositionally biased stretch (basic and acidic residues) spans 196–210 (RESSFSREKNPDLTR). 4 PC repeats span residues 873-895 (GLLLGLASSYLGSMDAKVTKLLS), 959-982 (AAGFSLGLINLGRGSNLPGMSDLK), 1006-1024 (GAIMALTMIYMKTNDLEVA), and 1099-1124 (GICFSLGLRFAGTGNPKAKEILINFL).

The protein belongs to the APC1 family. The APC/C is composed of at least 13 subunits: apc1, apc2, nuc2, apc4, apc5, cut9, apc8, apc10, apc11, hcn1, apc13, apc14 and apc15.

Component of the anaphase-promoting complex/cyclosome (APC/C), a cell cycle-regulated E3 ubiquitin-protein ligase complex that controls progression through mitosis and the G1 phase of the cell cycle. The APC/C is thought to confer substrate specificity and, in the presence of ubiquitin-conjugating E2 enzymes, it catalyzes the formation of protein-ubiquitin conjugates that are subsequently degraded by the 26S proteasome. Mutations to this protein prevent the exit from mitosis. This is Anaphase-promoting complex subunit 1 (cut4) from Schizosaccharomyces pombe (strain 972 / ATCC 24843) (Fission yeast).